The chain runs to 224 residues: MESGAYGAANAGGSFDLRRYVSQPQVVTRLVSMVLALIVFSCIFGEGYINLHSSDQLHCVFNRNEDACRYGSAIGVLAFLASAFFLVVDAFFSQISNATDRKYLVIGDLLFSALWTFLWFVGFCFLTNQWAATKPDDVLVGADSARAAITFSFFSIFSWGVLASLAYQRYKAGVDAFIQNYVDPTPDPTTAYASYPSASVENYQQPPFTQNVETTEGYQPPPVY.

Met1 carries the N-acetylmethionine modification. Phosphoserine is present on Ser3. In terms of domain architecture, MARVEL spans 20 to 171; sequence YVSQPQVVTR…LASLAYQRYK (152 aa). 4 helical membrane-spanning segments follow: residues 30–50, 73–93, 105–125, and 147–167; these read LVSM…GYIN, AIGV…AFFS, VIGD…GFCF, and AAIT…SLAY.

The protein belongs to the synaptogyrin family. May be tyrosine phosphorylated by Src. As to expression, ubiquitously expressed with lower expression in brain (at protein level).

It is found in the cytoplasmic vesicle membrane. It localises to the cytoplasmic vesicle. The protein resides in the secretory vesicle. The protein localises to the synaptic vesicle membrane. May play a role in regulated exocytosis. In neuronal cells, modulates the localization of synaptophysin/SYP into synaptic-like microvesicles and may therefore play a role in the formation and/or the maturation of this vesicles. May also play a role in GLUT4 storage and transport to the plasma membrane. The sequence is that of Synaptogyrin-2 from Rattus norvegicus (Rat).